The following is a 1171-amino-acid chain: Zinc finger BED domain-containing protein 4 (1171 aa).

Residues 25 to 62 form a disordered region; the sequence is EEEDDDGIPPDSLERMDFKSEQEDMKQTDSGGERAGLG. The segment covering 36–51 has biased composition (basic and acidic residues); sequence SLERMDFKSEQEDMKQ. Lys43 is covalently cross-linked (Glycyl lysine isopeptide (Lys-Gly) (interchain with G-Cter in SUMO2)). 2 BED-type zinc fingers span residues 115-172 and 285-342; these read RKKS…LIQE and RRRS…VLQE. Zn(2+)-binding residues include Cys136, Cys139, His160, His165, Cys306, Cys309, His330, and His335. Residues 362-385 are compositionally biased toward low complexity; sequence LLPPEGELSSVSSSPVKPVRESPS. The disordered stretch occupies residues 362–405; the sequence is LLPPEGELSSVSSSPVKPVRESPSASSSPDRLTEDLQSHLNPGD. BED-type zinc fingers lie at residues 456 to 512 and 558 to 615; these read RLKS…VGSQ and KKTS…LKTE. Zn(2+) is bound by residues Cys477 and Cys480. Lys489 is covalently cross-linked (Glycyl lysine isopeptide (Lys-Gly) (interchain with G-Cter in SUMO2)). 6 residues coordinate Zn(2+): His500, His505, Cys579, Cys582, His603, and His608. The tract at residues 614–640 is disordered; it reads TEVSETARPSSPDTRVPRGTELSGASS. Ser624 carries the post-translational modification Phosphoserine. A required for homodimerization and nuclear accumulation region spans residues 1086 to 1171; the sequence is LAYLEEEVLE…VNLPLIYFQY (86 aa).

Homodimer; via C-terminus. Interacts with MYH9. Interacts with SAFB/SAFB1. As to expression, expressed in testis, heart, lung, and weakly expressed in brain, liver, muscle, placenta and small intestine. Expressed in the retina, found in the cone photoreceptors, Mueller cells, cone pedicles and in the innermost retinal layer.

Its subcellular location is the nucleus. The protein resides in the cytoplasm. It localises to the photoreceptor inner segment. In terms of biological role, transcriptional regulator that binds to poly-guanine tracts in gene promoters and activates transcription. Able to bind single- and double-stranded DNA and RNA. This chain is Zinc finger BED domain-containing protein 4 (ZBED4), found in Homo sapiens (Human).